The chain runs to 612 residues: Membrane protein insertase YidC (612 aa).

A run of 7 helical transmembrane segments spans residues asparagine 4 to histidine 24, leucine 329 to phenylalanine 349, valine 358 to leucine 378, isoleucine 434 to leucine 454, phenylalanine 484 to threonine 504, leucine 524 to leucine 544, and tyrosine 546 to valine 566.

It belongs to the OXA1/ALB3/YidC family. Type 1 subfamily. As to quaternary structure, interacts with the Sec translocase complex via SecD. Specifically interacts with transmembrane segments of nascent integral membrane proteins during membrane integration.

Its subcellular location is the cell inner membrane. Required for the insertion and/or proper folding and/or complex formation of integral membrane proteins into the membrane. Involved in integration of membrane proteins that insert both dependently and independently of the Sec translocase complex, as well as at least some lipoproteins. Aids folding of multispanning membrane proteins. This Azobacteroides pseudotrichonymphae genomovar. CFP2 protein is Membrane protein insertase YidC.